Reading from the N-terminus, the 317-residue chain is 4-hydroxy-3-methylbut-2-enyl diphosphate reductase (317 aa).

A [4Fe-4S] cluster-binding site is contributed by cysteine 12. Residues histidine 41 and histidine 74 each contribute to the (2E)-4-hydroxy-3-methylbut-2-enyl diphosphate site. Dimethylallyl diphosphate is bound by residues histidine 41 and histidine 74. Isopentenyl diphosphate is bound by residues histidine 41 and histidine 74. Cysteine 96 lines the [4Fe-4S] cluster pocket. Histidine 124 provides a ligand contact to (2E)-4-hydroxy-3-methylbut-2-enyl diphosphate. Histidine 124 contacts dimethylallyl diphosphate. Histidine 124 contributes to the isopentenyl diphosphate binding site. Residue glutamate 126 is the Proton donor of the active site. Residue threonine 168 participates in (2E)-4-hydroxy-3-methylbut-2-enyl diphosphate binding. Cysteine 198 is a binding site for [4Fe-4S] cluster. Positions 226, 227, 228, and 270 each coordinate (2E)-4-hydroxy-3-methylbut-2-enyl diphosphate. Dimethylallyl diphosphate-binding residues include serine 226, serine 227, asparagine 228, and serine 270. Isopentenyl diphosphate is bound by residues serine 226, serine 227, asparagine 228, and serine 270.

Belongs to the IspH family. [4Fe-4S] cluster serves as cofactor.

The enzyme catalyses isopentenyl diphosphate + 2 oxidized [2Fe-2S]-[ferredoxin] + H2O = (2E)-4-hydroxy-3-methylbut-2-enyl diphosphate + 2 reduced [2Fe-2S]-[ferredoxin] + 2 H(+). It catalyses the reaction dimethylallyl diphosphate + 2 oxidized [2Fe-2S]-[ferredoxin] + H2O = (2E)-4-hydroxy-3-methylbut-2-enyl diphosphate + 2 reduced [2Fe-2S]-[ferredoxin] + 2 H(+). The protein operates within isoprenoid biosynthesis; dimethylallyl diphosphate biosynthesis; dimethylallyl diphosphate from (2E)-4-hydroxy-3-methylbutenyl diphosphate: step 1/1. It participates in isoprenoid biosynthesis; isopentenyl diphosphate biosynthesis via DXP pathway; isopentenyl diphosphate from 1-deoxy-D-xylulose 5-phosphate: step 6/6. Catalyzes the conversion of 1-hydroxy-2-methyl-2-(E)-butenyl 4-diphosphate (HMBPP) into a mixture of isopentenyl diphosphate (IPP) and dimethylallyl diphosphate (DMAPP). Acts in the terminal step of the DOXP/MEP pathway for isoprenoid precursor biosynthesis. The chain is 4-hydroxy-3-methylbut-2-enyl diphosphate reductase from Hahella chejuensis (strain KCTC 2396).